Consider the following 186-residue polypeptide: Ribosome-recycling factor (186 aa).

It belongs to the RRF family.

The protein localises to the cytoplasm. Responsible for the release of ribosomes from messenger RNA at the termination of protein biosynthesis. May increase the efficiency of translation by recycling ribosomes from one round of translation to another. In Chlorobaculum parvum (strain DSM 263 / NCIMB 8327) (Chlorobium vibrioforme subsp. thiosulfatophilum), this protein is Ribosome-recycling factor.